An 84-amino-acid chain; its full sequence is Envelope small membrane protein (84 aa).

The Virion surface portion of the chain corresponds to M1 to I18. The chain crosses the membrane as a helical span at residues I19–F39. Over K40 to D80 the chain is Intravirion.

This sequence belongs to the betacoronaviruses E protein family. Homopentamer. Interacts with membrane protein M in the budding compartment of the host cell, which is located between endoplasmic reticulum and the Golgi complex. Interacts with Nucleoprotein.

The protein localises to the host Golgi apparatus membrane. Its function is as follows. Plays a central role in virus morphogenesis and assembly. Acts as a viroporin and self-assembles in host membranes forming pentameric protein-lipid pores that allow ion transport. Also plays a role in the induction of apoptosis. This is Envelope small membrane protein from Human coronavirus OC43 (HCoV-OC43).